Here is a 318-residue protein sequence, read N- to C-terminus: Methionyl-tRNA formyltransferase (318 aa).

Position 112-115 (112-115) interacts with (6S)-5,6,7,8-tetrahydrofolate; it reads SILP.

This sequence belongs to the Fmt family.

It catalyses the reaction L-methionyl-tRNA(fMet) + (6R)-10-formyltetrahydrofolate = N-formyl-L-methionyl-tRNA(fMet) + (6S)-5,6,7,8-tetrahydrofolate + H(+). In terms of biological role, attaches a formyl group to the free amino group of methionyl-tRNA(fMet). The formyl group appears to play a dual role in the initiator identity of N-formylmethionyl-tRNA by promoting its recognition by IF2 and preventing the misappropriation of this tRNA by the elongation apparatus. This is Methionyl-tRNA formyltransferase from Shewanella sp. (strain ANA-3).